A 775-amino-acid polypeptide reads, in one-letter code: Dipeptidyl peptidase 4 (775 aa).

The N-terminal stretch at 1-15 (MKFLSLLLLAGIAQA) is a signal peptide. N81, N111, N170, and N219 each carry an N-linked (GlcNAc...) asparagine glycan. Residues S613, D690, and H725 each act as charge relay system in the active site.

Belongs to the peptidase S9B family.

The protein localises to the secreted. It carries out the reaction Release of an N-terminal dipeptide, Xaa-Yaa-|-Zaa-, from a polypeptide, preferentially when Yaa is Pro, provided Zaa is neither Pro nor hydroxyproline.. Extracellular dipeptidyl-peptidase which removes N-terminal dipeptides sequentially from polypeptides having unsubstituted N-termini provided that the penultimate residue is proline. Contributes to pathogenicity. The sequence is that of Dipeptidyl peptidase 4 (DPP4) from Trichophyton equinum (Horse ringworm fungus).